Here is a 188-residue protein sequence, read N- to C-terminus: Tetratricopeptide repeat protein 36 (188 aa).

TPR repeat units lie at residues 50 to 83 (SKAL…LPER), 85 to 117 (SAYN…SGGR), and 122 to 155 (RQGF…GSPF).

The protein belongs to the TTC36 family.

This Bos taurus (Bovine) protein is Tetratricopeptide repeat protein 36 (TTC36).